The chain runs to 139 residues: Cuticle protein 76 (139 aa).

6 repeat units span residues 7–10 (AAPA), 68–71 (AAPA), 75–78 (AAPV), 93–95 (AAP), 105–108 (AAPA), and 121–124 (AAPA).

Its function is as follows. Component of the cuticle of migratory locust which contains more than 100 different structural proteins. The sequence is that of Cuticle protein 76 from Locusta migratoria (Migratory locust).